We begin with the raw amino-acid sequence, 336 residues long: Large ribosomal subunit protein uL3 (336 aa).

The segment at 1-34 (MVRHHQPRKGSVAFSPRKRAAKETPRIKSWPQND) is disordered.

The protein belongs to the universal ribosomal protein uL3 family. In terms of assembly, part of the 50S ribosomal subunit. Forms a cluster with proteins L14 and L24e.

One of the primary rRNA binding proteins, it binds directly near the 3'-end of the 23S rRNA, where it nucleates assembly of the 50S subunit. This is Large ribosomal subunit protein uL3 from Methanobrevibacter smithii (strain ATCC 35061 / DSM 861 / OCM 144 / PS).